Here is a 256-residue protein sequence, read N- to C-terminus: Isoprenyl transferase (256 aa).

Aspartate 33 is an active-site residue. Mg(2+) is bound at residue aspartate 33. Substrate contacts are provided by residues 34-37 (GNGR), tryptophan 38, arginine 46, histidine 50, and 78-80 (STE). Residue asparagine 81 is the Proton acceptor of the active site. Residues tryptophan 82, arginine 84, arginine 201, and 207 to 209 (RIS) each bind substrate. Glutamate 220 contributes to the Mg(2+) binding site.

It belongs to the UPP synthase family. In terms of assembly, homodimer. It depends on Mg(2+) as a cofactor.

Catalyzes the condensation of isopentenyl diphosphate (IPP) with allylic pyrophosphates generating different type of terpenoids. This chain is Isoprenyl transferase, found in Staphylococcus aureus (strain Mu50 / ATCC 700699).